Here is a 679-residue protein sequence, read N- to C-terminus: Genome polyprotein (679 aa).

Residues 1 to 14 (SAGMIIMLIPTVMA) constitute a propeptide, ER anchor for the capsid protein C, removed in mature form by serine protease NS3. Residues 2 to 22 (AGMIIMLIPTVMAFHLTTRNG) traverse the membrane as a helical segment. Residues 23–138 (EPHMIVSRQE…GAWKHAQRIE (116 aa)) lie on the Extracellular side of the membrane. A glycan (N-linked (GlcNAc...) asparagine; by host) is linked at Asn-83. A helical transmembrane segment spans residues 139 to 159 (IWILRHPGFTIMAAILAYTIG). Residues 160–165 (TTHFQR) lie on the Cytoplasmic side of the membrane. The chain crosses the membrane as a helical span at residues 166 to 180 (ALIFILLTAVAPSMT). Residues 181–625 (MRCIGISNRD…LHQVFGAIYG (445 aa)) lie on the Extracellular side of the membrane. Disulfide bonds link Cys-183–Cys-210, Cys-240–Cys-301, Cys-254–Cys-285, and Cys-272–Cys-296. Asn-247 carries N-linked (GlcNAc...) asparagine; by host glycosylation. The interval 278–291 (DRGWGNGCGLFGKG) is fusion peptide. N-linked (GlcNAc...) asparagine; by host glycosylation is present at Asn-333. 2 cysteine pairs are disulfide-bonded: Cys-365–Cys-465 and Cys-482–Cys-513. Residues 626–646 (AAFSGVSWTMKILIGVIITWI) form a helical membrane-spanning segment. At 647–652 (GMNSRS) the chain is on the cytoplasmic side. A helical transmembrane segment spans residues 653–673 (TSLSVSLVLVGIVTLYLGVMV). The Extracellular portion of the chain corresponds to 674–679 (QADSGC).

Forms heterodimers with envelope protein E in the endoplasmic reticulum and Golgi. In terms of assembly, homodimer; in the endoplasmic reticulum and Golgi. Interacts with protein prM. Interacts with non-structural protein 1. Cleaved in post-Golgi vesicles by a host furin, releasing the mature small envelope protein M, and peptide pr. This cleavage is incomplete as up to 30% of viral particles still carry uncleaved prM. In terms of processing, N-glycosylated. Post-translationally, N-glycosylated. The excreted form is glycosylated and this is required for efficient secretion of the protein from infected cells. Specific enzymatic cleavages in vivo yield mature proteins. Cleavages in the lumen of endoplasmic reticulum are performed by host signal peptidase, wereas cleavages in the cytoplasmic side are performed by serine protease NS3. Signal cleavage at the 2K-4B site requires a prior NS3 protease-mediated cleavage at the 4A-2K site.

It is found in the secreted. It localises to the virion membrane. The protein resides in the host endoplasmic reticulum membrane. Prevents premature fusion activity of envelope proteins in trans-Golgi by binding to envelope protein E at pH6.0. After virion release in extracellular space, gets dissociated from E dimers. Functionally, acts as a chaperone for envelope protein E during intracellular virion assembly by masking and inactivating envelope protein E fusion peptide. prM is the only viral peptide matured by host furin in the trans-Golgi network probably to avoid catastrophic activation of the viral fusion activity in acidic Golgi compartment prior to virion release. prM-E cleavage is inefficient, and many virions are only partially matured. These uncleaved prM would play a role in immune evasion. In terms of biological role, may play a role in virus budding. Exerts cytotoxic effects by activating a mitochondrial apoptotic pathway through M ectodomain. May display a viroporin activity. Its function is as follows. Binds to host cell surface receptor and mediates fusion between viral and cellular membranes. Envelope protein is synthesized in the endoplasmic reticulum in the form of heterodimer with protein prM. They play a role in virion budding in the ER, and the newly formed immature particle is covered with 60 spikes composed of heterodimer between precursor prM and envelope protein E. The virion is transported to the Golgi apparatus where the low pH causes dissociation of PrM-E heterodimers and formation of E homodimers. prM-E cleavage is inefficient, and many virions are only partially matured. These uncleaved prM would play a role in immune evasion. Involved in immune evasion, pathogenesis and viral replication. Once cleaved off the polyprotein, is targeted to three destinations: the viral replication cycle, the plasma membrane and the extracellular compartment. Essential for viral replication. Required for formation of the replication complex and recruitment of other non-structural proteins to the ER-derived membrane structures. Excreted as a hexameric lipoparticle that plays a role against host immune response. Antagonizing the complement function. Binds to the host macrophages and dendritic cells. Inhibits signal transduction originating from Toll-like receptor 3 (TLR3). Functionally, disrupts the host endothelial glycocalyx layer of host pulmonary microvascular endothelial cells, inducing degradation of sialic acid and shedding of heparan sulfate proteoglycans. NS1 induces expression of sialidases, heparanase, and activates cathepsin L, which activates heparanase via enzymatic cleavage. These effects are probably linked to the endothelial hyperpermeability observed in severe dengue disease. The polypeptide is Genome polyprotein (Dengue virus type 2 (strain Thailand/PUO-218/1980) (DENV-2)).